Here is a 170-residue protein sequence, read N- to C-terminus: Large ribosomal subunit protein uL11 (170 aa).

This sequence belongs to the universal ribosomal protein uL11 family. As to quaternary structure, part of the ribosomal stalk of the 50S ribosomal subunit. Interacts with L10 and the large rRNA to form the base of the stalk. L10 forms an elongated spine to which L12 dimers bind in a sequential fashion forming a multimeric L10(L12)X complex.

In terms of biological role, forms part of the ribosomal stalk which helps the ribosome interact with GTP-bound translation factors. This is Large ribosomal subunit protein uL11 from Saccharolobus islandicus (strain M.16.27) (Sulfolobus islandicus).